Consider the following 271-residue polypeptide: Transmembrane protein 150A (271 aa).

Over M1 to T2 the chain is Cytoplasmic. A helical transmembrane segment spans residues A3 to Y23. At A24–E75 the chain is on the extracellular side. N-linked (GlcNAc...) asparagine glycans are attached at residues N37 and N41. Residues S76–L96 form a helical membrane-spanning segment. The Cytoplasmic portion of the chain corresponds to R97 to S108. The chain crosses the membrane as a helical span at residues W109 to G129. Over N130–H140 the chain is Extracellular. A helical transmembrane segment spans residues Y141–L161. Over S162–R178 the chain is Cytoplasmic. Residues S179 to E199 traverse the membrane as a helical segment. The Extracellular segment spans residues S200–E211. A helical transmembrane segment spans residues W212–V232. The Cytoplasmic segment spans residues S233–I271.

This sequence belongs to the DRAM/TMEM150 family. As to quaternary structure, interacts (via C-terminal cytoplasmic tail) with PI4KA.

It localises to the cell membrane. Functionally, regulates localization of phosphatidylinositol 4-kinase (PI4K) to the plasma membrane, possibly by reducing the association of TTC7 (TTC7A or TTC7B) with the PI4K complex. Acts as a regulator of phosphatidylinositol 4-phosphate (PtdIns(4)P) synthesis. May also play a role in fasting-induced catabolism. The protein is Transmembrane protein 150A (TMEM150A) of Homo sapiens (Human).